The chain runs to 237 residues: Lipid A 1-diphosphate synthase (237 aa).

The Cytoplasmic portion of the chain corresponds to Met-1 to Leu-5. Residues Pro-6–Val-26 traverse the membrane as a helical segment. The Periplasmic segment spans residues Asn-27 to Arg-62. The helical transmembrane segment at Ala-63–Glu-83 threads the bilayer. At Asn-84–Arg-90 the chain is on the cytoplasmic side. A helical membrane pass occupies residues Ile-91–Ala-111. The Periplasmic portion of the chain corresponds to Leu-112–Ser-145. Lys-167 is a topological domain (cytoplasmic). A helical transmembrane segment spans residues Val-168–Gly-188. Residues Ala-189–Asp-194 are Periplasmic-facing. The helical transmembrane segment at Ile-195 to Leu-215 threads the bilayer. The Cytoplasmic portion of the chain corresponds to Ser-216–Lys-237.

This sequence belongs to the LpxT phosphotransferase family.

Its subcellular location is the cell inner membrane. It carries out the reaction di-trans,octa-cis-undecaprenyl diphosphate + alpha-Kdo-(2-&gt;4)-alpha-Kdo-(2-&gt;6)-lipid A (E. coli) = (Kdo)2-lipid A 1-diphosphate + di-trans,octa-cis-undecaprenyl phosphate. The protein operates within bacterial outer membrane biogenesis; lipopolysaccharide biosynthesis. Inhibited by BasR. This regulation does not occur at the level of transcription, but rather following the assembly of LpxT into the inner membrane. In terms of biological role, involved in the modification of the lipid A domain of lipopolysaccharides (LPS). Transfers a phosphate group from undecaprenyl pyrophosphate (C55-PP) to lipid A to form lipid A 1-diphosphate. Contributes to the recycling of undecaprenyl phosphate (C55-P). In vitro, has low undecaprenyl-diphosphate phosphatase activity. This Escherichia coli (strain K12) protein is Lipid A 1-diphosphate synthase.